A 103-amino-acid polypeptide reads, in one-letter code: Small ribosomal subunit protein uS10 (103 aa).

It belongs to the universal ribosomal protein uS10 family. Part of the 30S ribosomal subunit.

In terms of biological role, involved in the binding of tRNA to the ribosomes. The polypeptide is Small ribosomal subunit protein uS10 (Salinibacter ruber (strain DSM 13855 / M31)).